The primary structure comprises 132 residues: MARVTVEDCIDKVDNRFELVLLAGHRARQISQGAQITVDRDNDKNPVVALREIAEETLSPADLKEDLIHSLQKHVEVDEPEMASEFISHSSEAGGVLGTSSEEEGSSFDHMSEEELLAGIEGLVVPEKSDDY.

The tract at residues 90–109 is disordered; the sequence is SSEAGGVLGTSSEEEGSSFD.

This sequence belongs to the RNA polymerase subunit omega family. The RNAP catalytic core consists of 2 alpha, 1 beta, 1 beta' and 1 omega subunit. When a sigma factor is associated with the core the holoenzyme is formed, which can initiate transcription.

The enzyme catalyses RNA(n) + a ribonucleoside 5'-triphosphate = RNA(n+1) + diphosphate. Functionally, promotes RNA polymerase assembly. Latches the N- and C-terminal regions of the beta' subunit thereby facilitating its interaction with the beta and alpha subunits. In Bartonella henselae (strain ATCC 49882 / DSM 28221 / CCUG 30454 / Houston 1) (Rochalimaea henselae), this protein is DNA-directed RNA polymerase subunit omega.